We begin with the raw amino-acid sequence, 471 residues long: MATMSSAAVEVISKETIKPRNPTPYQLRNYNMSLLDQYSSLVYVPIILFYPAASDANSTGSKHHDDLHLLKRSLSETLVHFYPMAGRMKDNMTVDCNDEGIDFFEVRIKGRMCDFMMKSDAHLSLLLPSEVASTNFVKEAQVIVQVNMFDCGGTAICFCISNKIADACTMITFIRSLAGTTNIARRGSSIAAPTTNQNLVPSFDSTSLFPPSEQLASQVSYPTQDSTSVDKLVSKRFVFDAAKITSAREKLQSLMHDKYKCHRPTRVEVVSALIWKSAVKSAPPGSISTVTHAMNFRKKMDPPLQDASFGNLCVVVTAVLPATTATTTNPATKKVSSTSNEEQVALDELSDFVALLRREIDKVKGDKGCMEKIIQKFIYGHDASVAKDSDVEDKVTALFMTSWCKFGFYEADFGWGTPVWVTTVPLIEPKYKNMVFMNDMKCGEGIEVWVNFLEDDMTKFEHHLREILQLF.

It belongs to the plant acyltransferase family.

The catalysed reaction is (13S,14R)-1,13-dihydroxy-N-methylcanadine + acetyl-CoA = (13S,14R)-13-O-acetyl-1-hydroxy-N-methylcanadine + CoA. It functions in the pathway alkaloid biosynthesis. Functionally, acetyltransferase involved in the biosynthesis of the benzylisoquinoline alkaloid noscapine. Converts (13S,14R)-1,13-dihydroxy-N-methylcanadine to (13S,14R)-13-O-acetyl-1-hydroxy-N-methylcanadine. In Papaver somniferum (Opium poppy), this protein is (13S,14R)-1,13-dihydroxy-N-methylcanadine 13-O-acetyltransferase AT1.